A 233-amino-acid polypeptide reads, in one-letter code: V-type proton ATPase subunit E (233 aa).

The protein belongs to the V-ATPase E subunit family. In terms of assembly, V-ATPase is a heteromultimeric enzyme composed of a peripheral catalytic V1 complex (components A to H) attached to an integral membrane V0 proton pore complex (components: a, c, c', c'' and d).

Functionally, subunit of the peripheral V1 complex of vacuolar ATPase essential for assembly or catalytic function. V-ATPase is responsible for acidifying a variety of intracellular compartments in eukaryotic cells. This is V-type proton ATPase subunit E (vatE) from Dictyostelium discoideum (Social amoeba).